The chain runs to 445 residues: Tubulin beta-4B chain (445 aa).

An MREI motif motif is present at residues 1-4 (MREI). Gln-11 contacts GTP. Thr-55 is modified (phosphothreonine). At Lys-58 the chain carries N6-acetyllysine. Residues Glu-69, Ser-138, Gly-142, Thr-143, and Gly-144 each coordinate GTP. Glu-69 serves as a coordination point for Mg(2+). Ser-172 carries the phosphoserine; by CDK1 modification. Asn-204 and Asn-226 together coordinate GTP. Residues 426-445 (QDATAEEEGEFEEEAEEEVA) are disordered. The span at 429 to 445 (TAEEEGEFEEEAEEEVA) shows a compositional bias: acidic residues. The residue at position 438 (Glu-438) is a 5-glutamyl polyglutamate.

It belongs to the tubulin family. Dimer of alpha and beta chains. A typical microtubule is a hollow water-filled tube with an outer diameter of 25 nm and an inner diameter of 15 nM. Alpha-beta heterodimers associate head-to-tail to form protofilaments running lengthwise along the microtubule wall with the beta-tubulin subunit facing the microtubule plus end conferring a structural polarity. Microtubules usually have 13 protofilaments but different protofilament numbers can be found in some organisms and specialized cells. Component of sperm flagellar doublet microtubules. Requires Mg(2+) as cofactor. Post-translationally, some glutamate residues at the C-terminus are polyglycylated, resulting in polyglycine chains on the gamma-carboxyl group. Glycylation is mainly limited to tubulin incorporated into axonemes (cilia and flagella) whereas glutamylation is prevalent in neuronal cells, centrioles, axonemes, and the mitotic spindle. Both modifications can coexist on the same protein on adjacent residues, and lowering polyglycylation levels increases polyglutamylation, and reciprocally. Cilia and flagella glycylation is required for their stability and maintenance. Flagella glycylation controls sperm motility. Some glutamate residues at the C-terminus are polyglutamylated, resulting in polyglutamate chains on the gamma-carboxyl group. Polyglutamylation plays a key role in microtubule severing by spastin (SPAST). SPAST preferentially recognizes and acts on microtubules decorated with short polyglutamate tails: severing activity by SPAST increases as the number of glutamates per tubulin rises from one to eight, but decreases beyond this glutamylation threshold. Glutamylation is also involved in cilia motility. In terms of processing, phosphorylated on Ser-172 by CDK1 during the cell cycle, from metaphase to telophase, but not in interphase. This phosphorylation inhibits tubulin incorporation into microtubules.

It is found in the cytoplasm. It localises to the cytoskeleton. Its subcellular location is the flagellum axoneme. Tubulin is the major constituent of microtubules, a cylinder consisting of laterally associated linear protofilaments composed of alpha- and beta-tubulin heterodimers. Microtubules grow by the addition of GTP-tubulin dimers to the microtubule end, where a stabilizing cap forms. Below the cap, tubulin dimers are in GDP-bound state, owing to GTPase activity of alpha-tubulin. This chain is Tubulin beta-4B chain (Tubb4b), found in Rattus norvegicus (Rat).